Here is a 594-residue protein sequence, read N- to C-terminus: DNA mismatch repair protein MutL (594 aa).

Belongs to the DNA mismatch repair MutL/HexB family.

This protein is involved in the repair of mismatches in DNA. It is required for dam-dependent methyl-directed DNA mismatch repair. May act as a 'molecular matchmaker', a protein that promotes the formation of a stable complex between two or more DNA-binding proteins in an ATP-dependent manner without itself being part of a final effector complex. This chain is DNA mismatch repair protein MutL, found in Rhizorhabdus wittichii (strain DSM 6014 / CCUG 31198 / JCM 15750 / NBRC 105917 / EY 4224 / RW1) (Sphingomonas wittichii).